Here is a 71-residue protein sequence, read N- to C-terminus: Disintegrin ussuristatin-2 (71 aa).

Residues 1-71 enclose the Disintegrin domain; it reads EAGEECDCGA…QSADCPRNGF (71 aa). Cystine bridges form between C6–C21, C8–C16, C15–C38, C29–C35, C34–C59, and C47–C66. The Cell attachment site; atypical (KGD) motif lies at 51 to 53; the sequence is KGD.

It belongs to the venom metalloproteinase (M12B) family. P-II subfamily. P-IId sub-subfamily. In terms of assembly, homodimer. In terms of tissue distribution, expressed by the venom gland.

Its subcellular location is the secreted. Functionally, suppress platelet aggregation induced by ADP, collagen, thrombin, and epinephrine (IC(50)=170-330 nM). Also dose-dependently inhibits the adhesion of human melanoma cells to fibrinogen but not to fibronectin. The polypeptide is Disintegrin ussuristatin-2 (Gloydius ussuriensis (Ussuri mamushi)).